Reading from the N-terminus, the 337-residue chain is Protein-arginine kinase (337 aa).

Residues I12 to Q240 enclose the Phosphagen kinase C-terminal domain. ATP is bound by residues A15–K19, R162–F166, and K193–S198.

The protein belongs to the ATP:guanido phosphotransferase family.

The catalysed reaction is L-arginyl-[protein] + ATP = N(omega)-phospho-L-arginyl-[protein] + ADP + H(+). Its function is as follows. Catalyzes the specific phosphorylation of arginine residues in proteins. The chain is Protein-arginine kinase from Clostridium perfringens (strain 13 / Type A).